Here is a 339-residue protein sequence, read N- to C-terminus: ATPase GET3 (339 aa).

34–41 (KGGVGKTT) lines the ATP pocket. The active site involves aspartate 63. Residues glutamate 243 and asparagine 270 each coordinate ATP. 2 residues coordinate Zn(2+): cysteine 281 and cysteine 284.

This sequence belongs to the arsA ATPase family. As to quaternary structure, homodimer.

It localises to the cytoplasm. Its subcellular location is the endoplasmic reticulum. Functionally, ATPase required for the post-translational delivery of tail-anchored (TA) proteins to the endoplasmic reticulum. Recognizes and selectively binds the transmembrane domain of TA proteins in the cytosol. This complex then targets to the endoplasmic reticulum by membrane-bound receptors, where the tail-anchored protein is released for insertion. This process is regulated by ATP binding and hydrolysis. ATP binding drives the homodimer towards the closed dimer state, facilitating recognition of newly synthesized TA membrane proteins. ATP hydrolysis is required for insertion. Subsequently, the homodimer reverts towards the open dimer state, lowering its affinity for the membrane-bound receptor, and returning it to the cytosol to initiate a new round of targeting. The sequence is that of ATPase GET3 from Coccidioides immitis (strain RS) (Valley fever fungus).